A 1610-amino-acid chain; its full sequence is Adenylate cyclase type 10 (1610 aa).

2 Guanylate cyclase domains span residues 42–179 (VLMF…RLAQ) and 293–418 (TIVF…ARMM). Mg(2+)-binding residues include Asp-47 and Ile-48. 47–52 (DISGFT) is a binding site for ATP. Position 95 (Lys-95) interacts with hydrogencarbonate. Asp-99 is a Mg(2+) binding site. ATP contacts are provided by Asp-99 and Lys-144. Val-167, Arg-176, and Met-337 together coordinate hydrogencarbonate. ATP-binding positions include Val-406 and 412-416 (NIAAR).

This sequence belongs to the adenylyl cyclase class-4/guanylyl cyclase family. Mg(2+) serves as cofactor. It depends on Mn(2+) as a cofactor.

Its subcellular location is the cell membrane. It localises to the cytoplasm. It is found in the cytoskeleton. The protein resides in the perinuclear region. The protein localises to the nucleus. Its subcellular location is the cell projection. It localises to the cilium. It catalyses the reaction ATP = 3',5'-cyclic AMP + diphosphate. Activated by manganese or magnesium ions. In the presence of magnesium ions, the enzyme is activated by bicarbonate. Calcium mildly increases the enzyme activity, also in the presence of magnesium ions. In terms of biological role, catalyzes the formation of the signaling molecule cAMP. May function as sensor that mediates responses to changes in cellular bicarbonate and CO(2) levels. Has a critical role in mammalian spermatogenesis by producing the cAMP which regulates cAMP-responsive nuclear factors indispensable for sperm maturation in the epididymis. Induces capacitation, the maturational process that sperm undergo prior to fertilization. Involved in ciliary beat regulation. The polypeptide is Adenylate cyclase type 10 (ADCY10) (Oryctolagus cuniculus (Rabbit)).